A 352-amino-acid chain; its full sequence is Cell division protein ZipA (352 aa).

Topologically, residues 1–5 are periplasmic; that stretch reads MQELR. A helical membrane pass occupies residues 6-26; it reads LVLIIVGALAISALLLHGLWT. Residues 27-352 are Cytoplasmic-facing; that stretch reads SRKEKPAKFG…REKAKLYSQA (326 aa). The span at 35-54 shows a compositional bias: basic and acidic residues; that stretch reads FGEKPLGKLDDSNRDTEGFD. Positions 35-56 are disordered; it reads FGEKPLGKLDDSNRDTEGFDHT.

It belongs to the ZipA family. As to quaternary structure, interacts with FtsZ via their C-terminal domains.

It localises to the cell inner membrane. Its function is as follows. Essential cell division protein that stabilizes the FtsZ protofilaments by cross-linking them and that serves as a cytoplasmic membrane anchor for the Z ring. Also required for the recruitment to the septal ring of downstream cell division proteins. This is Cell division protein ZipA from Photobacterium profundum (strain SS9).